Here is a 325-residue protein sequence, read N- to C-terminus: Probable isoaspartyl peptidase/L-asparaginase GA20639 (325 aa).

T184 functions as the Nucleophile in the catalytic mechanism. Substrate is bound by residues 212 to 215 (RIGD) and 235 to 238 (TGHG).

Belongs to the Ntn-hydrolase family. Heterodimer of an alpha and beta chain produced by autocleavage. In terms of processing, cleaved into an alpha and beta chain by autocatalysis; this activates the enzyme. The N-terminal residue of the beta subunit is responsible for the nucleophile hydrolase activity.

The catalysed reaction is L-asparagine + H2O = L-aspartate + NH4(+). The enzyme catalyses Cleavage of a beta-linked Asp residue from the N-terminus of a polypeptide.. Functionally, has both L-asparaginase and beta-aspartyl peptidase activity. Does not have aspartylglucosaminidase activity and is inactive toward GlcNAc-L-Asn. Likewise, has no activity toward glutamine. This chain is Probable isoaspartyl peptidase/L-asparaginase GA20639, found in Drosophila pseudoobscura pseudoobscura (Fruit fly).